Here is a 124-residue protein sequence, read N- to C-terminus: Small ribosomal subunit protein uS12 (124 aa).

A 3-methylthioaspartic acid modification is found at Asp89. Positions 102–124 are disordered; the sequence is LDTSGVNNRKHGRSKYGTKRPKS. The segment covering 109–124 has biased composition (basic residues); the sequence is NRKHGRSKYGTKRPKS.

This sequence belongs to the universal ribosomal protein uS12 family. In terms of assembly, part of the 30S ribosomal subunit. Contacts proteins S8 and S17. May interact with IF1 in the 30S initiation complex.

In terms of biological role, with S4 and S5 plays an important role in translational accuracy. Functionally, interacts with and stabilizes bases of the 16S rRNA that are involved in tRNA selection in the A site and with the mRNA backbone. Located at the interface of the 30S and 50S subunits, it traverses the body of the 30S subunit contacting proteins on the other side and probably holding the rRNA structure together. The combined cluster of proteins S8, S12 and S17 appears to hold together the shoulder and platform of the 30S subunit. The chain is Small ribosomal subunit protein uS12 from Francisella philomiragia subsp. philomiragia (strain ATCC 25017 / CCUG 19701 / FSC 153 / O#319-036).